Reading from the N-terminus, the 107-residue chain is SH3 domain-binding glutamic acid-rich-like protein 2 (107 aa).

The SH3-binding motif lies at 61–67 (QGNPLPP).

This sequence belongs to the SH3BGR family.

The protein localises to the nucleus. The polypeptide is SH3 domain-binding glutamic acid-rich-like protein 2 (SH3BGRL2) (Bos taurus (Bovine)).